Here is a 136-residue protein sequence, read N- to C-terminus: SPbeta prophage-derived uncharacterized protein YonI (136 aa).

The polypeptide is SPbeta prophage-derived uncharacterized protein YonI (yonI) (Bacillus subtilis (strain 168)).